A 725-amino-acid chain; its full sequence is Eukaryotic translation initiation factor 3 subunit B (725 aa).

At Ser-23 the chain carries Phosphoserine. Positions 39–129 (TVVVIEGAPV…HTFVVRKLNQ (91 aa)) constitute an RRM domain. Ser-135 is subject to Phosphoserine. At Thr-136 the chain carries Phosphothreonine. WD repeat units lie at residues 190–229 (DREN…MCAR), 304–344 (DGKK…LVDK), and 347–386 (IKID…QPAR). Positions 630-671 (LTKEDMKKIRKKLKDYNRLFDEEDIAEQSSANRELAARRRQL) form a coiled coil.

The protein belongs to the eIF-3 subunit B family. In terms of assembly, component of the eukaryotic translation initiation factor 3 (eIF-3) complex. The eIF-3 complex appears to include tif32/eif3a, SPAC25G10.08/eif3b, tif33/eif3c, SPBC4C3.07/eif3f, tif35/eif3g and sum1/eif3i. This set of common subunits may also associate exclusively with either moe1/eif3d and int6/eif3e, or with SPAC821.05/eif3h and SPAC1751.03/eif3m. The eIF-3 complex may also include SPAC3A12.13c/eif3j.

It localises to the cytoplasm. In terms of biological role, RNA-binding component of the eukaryotic translation initiation factor 3 (eIF-3) complex, which is involved in protein synthesis of a specialized repertoire of mRNAs and, together with other initiation factors, stimulates binding of mRNA and methionyl-tRNAi to the 40S ribosome. The eIF-3 complex specifically targets and initiates translation of a subset of mRNAs involved in cell proliferation. The sequence is that of Eukaryotic translation initiation factor 3 subunit B from Schizosaccharomyces pombe (strain 972 / ATCC 24843) (Fission yeast).